Reading from the N-terminus, the 594-residue chain is DNA ligase (594 aa).

Residue Glu-256 coordinates ATP. Catalysis depends on Lys-258, which acts as the N6-AMP-lysine intermediate. 6 residues coordinate ATP: Arg-263, Arg-279, Glu-309, Phe-349, Arg-426, and Lys-432.

This sequence belongs to the ATP-dependent DNA ligase family. The cofactor is Mg(2+).

The enzyme catalyses ATP + (deoxyribonucleotide)n-3'-hydroxyl + 5'-phospho-(deoxyribonucleotide)m = (deoxyribonucleotide)n+m + AMP + diphosphate.. Functionally, DNA ligase that seals nicks in double-stranded DNA during DNA replication, DNA recombination and DNA repair. This is DNA ligase from Ignicoccus hospitalis (strain KIN4/I / DSM 18386 / JCM 14125).